The following is a 393-amino-acid chain: tRNA (guanine-N(7)-)-methyltransferase (393 aa).

E124, E149, and D176 together coordinate S-adenosyl-L-methionine. D232 is a substrate binding site.

This sequence belongs to the class I-like SAM-binding methyltransferase superfamily. TrmB family.

The catalysed reaction is guanosine(46) in tRNA + S-adenosyl-L-methionine = N(7)-methylguanosine(46) in tRNA + S-adenosyl-L-homocysteine. The protein operates within tRNA modification; N(7)-methylguanine-tRNA biosynthesis. Functionally, catalyzes the formation of N(7)-methylguanine at position 46 (m7G46) in tRNA. The sequence is that of tRNA (guanine-N(7)-)-methyltransferase from Helicobacter pylori (strain HPAG1).